Consider the following 96-residue polypeptide: ESAT-6-like protein EsxH (96 aa).

Zn(2+) is bound by residues H14, H70, H76, and E77.

It belongs to the WXG100 family. ESAT-6 subfamily. In terms of assembly, forms a tight 1:1 complex with EsxG. When it is complexed to EsxG, interacts directly with host HGS/HRS.

It localises to the secreted. Functionally, esxH, in complex with EsxG, disrupts ESCRT function and impairs host phagosome maturation, thereby promoting intracellular bacterial growth. The complex acts by interacting, via EsxH, with the host hepatocyte growth factor-regulated tyrosine kinase substrate (HGS/HRS), a component of the ESCRT machinery. This is ESAT-6-like protein EsxH from Mycobacterium tuberculosis (strain ATCC 25618 / H37Rv).